The chain runs to 425 residues: Protein upregulated in glial subsets pugs-5 (425 aa).

A compositionally biased stretch (basic and acidic residues) spans 355–373 (NNNDVEKSTQIEKKPEKQG). The interval 355-407 (NNNDVEKSTQIEKKPEKQGPEIQEEVVEMETVKDEQPPKTSAVRFKENSPRLM) is disordered.

This chain is Protein upregulated in glial subsets pugs-5, found in Caenorhabditis elegans.